Consider the following 205-residue polypeptide: uncharacterized protein (205 aa).

Residues 10 to 75 (QDLLSAVDQQ…AANLMTVMTD (66 aa)) adopt a coiled-coil conformation. The disordered stretch occupies residues 108–141 (MPLPSSNTNNDQTSPPASGKTSETPKKNPTNAMF). The span at 111–141 (PSSNTNNDQTSPPASGKTSETPKKNPTNAMF) shows a compositional bias: polar residues.

This sequence belongs to the asfivirus K205R family.

It localises to the host cytoplasm. Functionally, induces host endoplasmic reticulum stress and consequently activates autophagy and NF-kappa-B signaling pathway. In turn, may induce autophagy-mediated STING1 degradation and innate immune evasion. This is an uncharacterized protein from Ornithodoros (relapsing fever ticks).